Consider the following 963-residue polypeptide: Spliceosome associated factor 3, U4/U6 recycling protein (963 aa).

Low complexity predominate over residues 1 to 11; that stretch reads MATAAETSASE. 2 disordered regions span residues 1 to 36 and 50 to 90; these read MATA…RTRR and TMGP…YDEE. A2 bears the N-acetylalanine mark. The interval 2–351 is mediates interaction with PRPF3; that stretch reads ATAAETSASE…LVPDLWIRYS (350 aa). S10 and S16 each carry phosphoserine. Over residues 14–23 the composition is skewed to basic and acidic residues; the sequence is AESKAGPKAD. The stretch at 21–46 forms a coiled coil; it reads KADGEEDEVKAARTRRKVLSRAVAAA. The segment covering 57 to 69 has biased composition (acidic residues); sequence QQEEGVSESDGDE. A coiled-coil region spans residues 82 to 110; sequence EYEWEYDEEEEKNQLEIERLEEQLSINVY. HAT repeat units follow at residues 126 to 158, 164 to 195, 201 to 237, 242 to 275, 324 to 356, 359 to 391, 394 to 430, and 487 to 520; these read GELT…DEIS, LDRE…YSVG, GGLE…FESA, ARLE…WSED, GDPA…YLDR, KVKD…AMER, VDHQ…YLRR, and NNMQ…LERA. The residue at position 215 (S215) is a Phosphoserine. Residues 487 to 520 form a required for interaction with USP4 region; sequence NNMQKARELWDSIMTRGNAKYANMWLEYYNLERA. A necessary and sufficient for U6 snRNA binding region spans residues 537–953; sequence CTSDYPEHVC…AATEAPKMSN (417 aa). Residues 559 to 619 adopt a coiled-coil conformation; it reads LEDWDIAVQK…ALKKKKKIRG (61 aa). The span at 590-601 shows a compositional bias: basic and acidic residues; the sequence is LVQQEEEKAEQR. Residues 590 to 694 are disordered; it reads LVQQEEEKAE…AASLKRDMPK (105 aa). Positions 600–670 are required for nuclear localization; sequence QRKRARAEKK…EVAAGPAGKC (71 aa). Positions 601–608 match the Nuclear localization signal motif; it reads RKRARAEK. A compositionally biased stretch (basic residues) spans 602–617; it reads KRARAEKKALKKKKKI. The segment covering 626–639 has biased composition (acidic residues); it reads DEDDEKEWGDDEEE. Position 650 is a phosphoserine (S650). At T657 the chain carries Phosphothreonine. Over residues 677–694 the composition is skewed to basic and acidic residues; sequence PPSKQKEKAASLKRDMPK. Positions 704–782 constitute an RRM 1 domain; it reads ITVFVSNLPY…RPMFVSPCVD (79 aa). S769, S795, and S852 each carry phosphoserine. The RRM 2 domain occupies 801 to 878; it reads HKLFISGLPF…NIIKVAISNP (78 aa). The segment at 878 to 898 is disordered; sequence PPQRKVPEKPETRKAPGGPML. Over residues 882 to 891 the composition is skewed to basic and acidic residues; that stretch reads KVPEKPETRK. R906 carries the post-translational modification Omega-N-methylarginine. A disordered region spans residues 920–948; that stretch reads LQRPSAAAPQAENGPAAAPAVAAPAATEA. The span at 925-948 shows a compositional bias: low complexity; it reads AAAPQAENGPAAAPAVAAPAATEA.

Component of the 7SK snRNP complex at least composed of P-TEFb (composed of CDK9 and CCNT1/cyclin-T1), HEXIM1, HEXIM2, BCDIN3, SART3 proteins and 7SK and U6 snRNAs. Interacts with AGO1 and AGO2. Interacts with PRPF3 and USP4; the interaction with PRPF3 is direct and recruits USP4 to its substrate PRPF3. Interacts with USP15; the interaction is direct. Interacts with HIV-1 Tat. In terms of tissue distribution, ubiquitously expressed.

It localises to the nucleus. The protein resides in the nucleoplasm. Its subcellular location is the cajal body. The protein localises to the nucleus speckle. It is found in the cytoplasm. Functionally, U6 snRNP-binding protein that functions as a recycling factor of the splicing machinery. Promotes the initial reassembly of U4 and U6 snRNPs following their ejection from the spliceosome during its maturation. Also binds U6atac snRNPs and may function as a recycling factor for U4atac/U6atac spliceosomal snRNP, an initial step in the assembly of U12-type spliceosomal complex. The U12-type spliceosomal complex plays a role in the splicing of introns with non-canonical splice sites. May also function as a substrate-targeting factor for deubiquitinases like USP4 and USP15. Recruits USP4 to ubiquitinated PRPF3 within the U4/U5/U6 tri-snRNP complex, promoting PRPF3 deubiquitination and thereby regulating the spliceosome U4/U5/U6 tri-snRNP spliceosomal complex disassembly. May also recruit the deubiquitinase USP15 to histone H2B and mediate histone deubiquitination, thereby regulating gene expression and/or DNA repair. May play a role in hematopoiesis probably through transcription regulation of specific genes including MYC. Its function is as follows. Regulates Tat transactivation activity through direct interaction. May be a cellular factor for HIV-1 gene expression and viral replication. The chain is Spliceosome associated factor 3, U4/U6 recycling protein from Homo sapiens (Human).